The following is a 385-amino-acid chain: 8-amino-7-oxononanoate synthase (385 aa).

Arg-21 contributes to the substrate binding site. Position 108–109 (108–109) interacts with pyridoxal 5'-phosphate; sequence GF. His-133 contacts substrate. Positions 179, 207, and 233 each coordinate pyridoxal 5'-phosphate. Lys-236 carries the post-translational modification N6-(pyridoxal phosphate)lysine. Thr-352 contacts substrate.

The protein belongs to the class-II pyridoxal-phosphate-dependent aminotransferase family. BioF subfamily. In terms of assembly, homodimer. Requires pyridoxal 5'-phosphate as cofactor.

The enzyme catalyses 6-carboxyhexanoyl-[ACP] + L-alanine + H(+) = (8S)-8-amino-7-oxononanoate + holo-[ACP] + CO2. Its pathway is cofactor biosynthesis; biotin biosynthesis. In terms of biological role, catalyzes the decarboxylative condensation of pimeloyl-[acyl-carrier protein] and L-alanine to produce 8-amino-7-oxononanoate (AON), [acyl-carrier protein], and carbon dioxide. The polypeptide is 8-amino-7-oxononanoate synthase (Salmonella paratyphi A (strain ATCC 9150 / SARB42)).